Here is a 115-residue protein sequence, read N- to C-terminus: MLWFQGKSLQIAKSSFGLLRNLSASNRALPVLTLFTKAPCPLCDEAKEVLQPYKDRFILQEVDITLPENSTWYERYKFDIPVFHLNGQFLMMHRVNTSKLEKQLRKLEQQVLATN.

The cysteines at positions 40 and 43 are disulfide-linked.

This sequence belongs to the glutaredoxin family. YDR286C subfamily.

The sequence is that of Glutaredoxin-like protein C5orf63 homolog from Mus musculus (Mouse).